We begin with the raw amino-acid sequence, 214 residues long: NAD(P)H-quinone oxidoreductase subunit 6, chloroplastic (214 aa).

5 consecutive transmembrane segments (helical) span residues 10–30 (FSLF…VLLP), 32–52 (ILYS…IYLL), 61–81 (AQVL…IMLV), 102–122 (IIGL…VTTP), and 163–183 (LLPF…AIVI).

It belongs to the complex I subunit 6 family. As to quaternary structure, NDH is composed of at least 16 different subunits, 5 of which are encoded in the nucleus.

The protein localises to the plastid. The protein resides in the chloroplast thylakoid membrane. It catalyses the reaction a plastoquinone + NADH + (n+1) H(+)(in) = a plastoquinol + NAD(+) + n H(+)(out). It carries out the reaction a plastoquinone + NADPH + (n+1) H(+)(in) = a plastoquinol + NADP(+) + n H(+)(out). NDH shuttles electrons from NAD(P)H:plastoquinone, via FMN and iron-sulfur (Fe-S) centers, to quinones in the photosynthetic chain and possibly in a chloroplast respiratory chain. The immediate electron acceptor for the enzyme in this species is believed to be plastoquinone. Couples the redox reaction to proton translocation, and thus conserves the redox energy in a proton gradient. This chain is NAD(P)H-quinone oxidoreductase subunit 6, chloroplastic (ndhG), found in Chlorokybus atmophyticus (Soil alga).